A 317-amino-acid polypeptide reads, in one-letter code: Metaxin-1 (317 aa).

Glycyl lysine isopeptide (Lys-Gly) (interchain with G-Cter in ubiquitin) cross-links involve residues Lys38, Lys41, and Lys78. A helical membrane pass occupies residues 164–184 (EELEKELYQEAQECLTLLSQR).

Belongs to the metaxin family. Interacts with MTX2/metaxin-2. Associates with the mitochondrial contact site and cristae organizing system (MICOS) complex, composed of at least MICOS10/MIC10, CHCHD3/MIC19, CHCHD6/MIC25, APOOL/MIC27, IMMT/MIC60, APOO/MIC23/MIC26 and QIL1/MIC13. This complex was also known under the names MINOS or MitOS complex. The MICOS complex associates with mitochondrial outer membrane proteins SAMM50, MTX1 and MTX2 (together described as components of the mitochondrial outer membrane sorting assembly machinery (SAM) complex) and DNAJC11, mitochondrial inner membrane protein TMEM11 and with HSPA9. The MICOS and SAM complexes together with DNAJC11 are part of a large protein complex spanning both membranes termed the mitochondrial intermembrane space bridging (MIB) complex. Interacts with ARMC1. Post-translationally, ubiquitinated by PRKN during mitophagy, leading to its degradation and enhancement of mitophagy. Deubiquitinated by USP30.

The protein resides in the mitochondrion outer membrane. In terms of biological role, involved in transport of proteins into the mitochondrion. Essential for embryonic development. The sequence is that of Metaxin-1 (MTX1) from Bos taurus (Bovine).